A 550-amino-acid polypeptide reads, in one-letter code: Leiomodin-2 (550 aa).

The segment at 1–47 is interaction with tropomyosin alpha; it reads MSTFGYRRGLSKYESIDEDELLASLSPEELKELERELEDIEPDRNLP. Interaction with actin regions lie at residues 1–165, 166–500, and 524–543; these read MSTF…TDNS, KPKT…KEIK, and VHEN…LRRV. S11, S15, and S24 each carry phosphoserine. Basic and acidic residues predominate over residues 84-94; sequence ERLGECGKVAE. Disordered stretches follow at residues 84–202 and 359–527; these read ERLG…PCGN and MDKQ…VHEN. The stretch at 91-147 forms a coiled coil; sequence KVAEEDKEESEEELIFTESNSEVSEEVCTEDEEESQEEEEDSEEEEDSEEEEETTEA. Acidic residues-rich tracts occupy residues 95–105 and 113–145; these read EDKEESEEELI and VSEE…EETT. Composition is skewed to polar residues over residues 151-164 and 170-193; these read INGT…NTDN and FKSQ…NSES. A compositionally biased stretch (basic and acidic residues) spans 359–377; sequence MDKQRQKRMQEQKQQEGHD. Residues 391–402 are compositionally biased toward polar residues; sequence TPGSSPYASPRQ. At S407 the chain carries Phosphoserine. Positions 421–452 are enriched in pro residues; the sequence is PPSPVAPPPPPPPPPLPPHMLPPPPPPPAPPL. The span at 468–479 shows a compositional bias: polar residues; it reads QQESAQRALQNG. Residues 480–490 are compositionally biased toward basic residues; the sequence is QRKKKGKKVKK. Basic and acidic residues predominate over residues 497 to 515; that stretch reads KEIKNSLRSVQEKKMEDSS. Residues 524-543 enclose the WH2 domain; it reads VHENLMEAIRGSSIRQLRRV.

It belongs to the tropomodulin family. As to quaternary structure, can bind at least three actin monomers and thereby provides a nucleus for actin filament formation. Interacts (via N-terminus) with tropomyosin alpha (TPM1) (via N-terminus). May also interact with TPM2 (via N-terminus). Interacts with FLII. Detected in neonate heart (at protein level). Detected in embryonic heart and in pharyngeal arches. Detected in adult heart.

The protein localises to the cytoplasm. The protein resides in the myofibril. It localises to the sarcomere. It is found in the m line. Its subcellular location is the cytoskeleton. In terms of biological role, mediates nucleation of actin filaments and thereby promotes actin polymerization. Plays a role in the regulation of actin filament length. Required for normal sarcomere organization in the heart, and for normal heart function. The sequence is that of Leiomodin-2 (Lmod2) from Mus musculus (Mouse).